Here is a 294-residue protein sequence, read N- to C-terminus: tRNA dimethylallyltransferase (294 aa).

11–18 (GPTAVGKT) provides a ligand contact to ATP. 13-18 (TAVGKT) provides a ligand contact to substrate. Residues 36 to 39 (DSQQ) are interaction with substrate tRNA.

It belongs to the IPP transferase family. In terms of assembly, monomer. Mg(2+) is required as a cofactor.

It carries out the reaction adenosine(37) in tRNA + dimethylallyl diphosphate = N(6)-dimethylallyladenosine(37) in tRNA + diphosphate. In terms of biological role, catalyzes the transfer of a dimethylallyl group onto the adenine at position 37 in tRNAs that read codons beginning with uridine, leading to the formation of N6-(dimethylallyl)adenosine (i(6)A). The chain is tRNA dimethylallyltransferase from Lactococcus lactis subsp. cremoris (strain SK11).